The following is a 307-amino-acid chain: tRNA pseudouridine synthase B (307 aa).

Aspartate 47 (nucleophile) is an active-site residue.

The protein belongs to the pseudouridine synthase TruB family. Type 1 subfamily.

The enzyme catalyses uridine(55) in tRNA = pseudouridine(55) in tRNA. In terms of biological role, responsible for synthesis of pseudouridine from uracil-55 in the psi GC loop of transfer RNAs. The polypeptide is tRNA pseudouridine synthase B (Chromohalobacter salexigens (strain ATCC BAA-138 / DSM 3043 / CIP 106854 / NCIMB 13768 / 1H11)).